The sequence spans 293 residues: MSFEHPGDGDSRYYLLKIAHEQFGCAPGELSEEQLQQAERIIGRQKHIEDAVLRCPDAAGVVIPASQIEEAWTQIANRYESAEALQQALDAQGLERVGMRAMLARELKVQAVLDCICAGLPEISDTDVSLYYFNHAEQFKVPARHKARHILVTINEDFPENTREAARTRIEAILKRLRGKPERFAEQAAKHSECPTAMQGGLLGEVVPGTLYPELDACLFQMAQGQLSPVLESPIGFHVLFCESVSTARQLTLEEILPRLRDRLQLRQRKAYQRKWLESLLQQNATLENLAHG.

One can recognise a PpiC domain in the interval 142–244; sequence PARHKARHIL…IGFHVLFCES (103 aa).

It belongs to the PpiC/parvulin rotamase family.

The catalysed reaction is [protein]-peptidylproline (omega=180) = [protein]-peptidylproline (omega=0). Required for the activation and stabilization of the iron-component (NifH) of nitrogenase. Probable PPIase. This chain is Putative peptidyl-prolyl cis-trans isomerase NifM (nifM), found in Azotobacter chroococcum mcd 1.